The chain runs to 154 residues: Superoxide dismutase [Cu-Zn] (154 aa).

Cu cation-binding residues include His-47, His-49, and His-64. Cys-58 and Cys-147 are oxidised to a cystine. Residues His-64, His-72, His-81, and Asp-84 each coordinate Zn(2+). His-121 contributes to the Cu cation binding site. Arg-144 lines the substrate pocket.

Belongs to the Cu-Zn superoxide dismutase family. Homodimer. Cu cation is required as a cofactor. The cofactor is Zn(2+).

The protein localises to the cytoplasm. The catalysed reaction is 2 superoxide + 2 H(+) = H2O2 + O2. In terms of biological role, destroys radicals which are normally produced within the cells and which are toxic to biological systems. This Claviceps purpurea (strain 20.1) (Ergot fungus) protein is Superoxide dismutase [Cu-Zn] (SOD1).